The sequence spans 131 residues: Large ribosomal subunit protein uL22 (131 aa).

The protein belongs to the universal ribosomal protein uL22 family. Part of the 50S ribosomal subunit.

In terms of biological role, this protein binds specifically to 23S rRNA; its binding is stimulated by other ribosomal proteins, e.g. L4, L17, and L20. It is important during the early stages of 50S assembly. It makes multiple contacts with different domains of the 23S rRNA in the assembled 50S subunit and ribosome. Its function is as follows. The globular domain of the protein is located near the polypeptide exit tunnel on the outside of the subunit, while an extended beta-hairpin is found that lines the wall of the exit tunnel in the center of the 70S ribosome. This is Large ribosomal subunit protein uL22 from Phytoplasma mali (strain AT).